Reading from the N-terminus, the 354-residue chain is Protein RecA (354 aa).

An ATP-binding site is contributed by 67-74 (GPESSGKT).

This sequence belongs to the RecA family.

The protein localises to the cytoplasm. Its function is as follows. Can catalyze the hydrolysis of ATP in the presence of single-stranded DNA, the ATP-dependent uptake of single-stranded DNA by duplex DNA, and the ATP-dependent hybridization of homologous single-stranded DNAs. It interacts with LexA causing its activation and leading to its autocatalytic cleavage. The polypeptide is Protein RecA (Pasteurella multocida (strain Pm70)).